A 1117-amino-acid polypeptide reads, in one-letter code: Telomerase reverse transcriptase (1117 aa).

A TEN region spans residues 1–191 (MQKINNINNN…VKQKKWYKNN (191 aa)). An RBD region spans residues 217-519 (NQYIYPEIQR…ENLEKVEEKL (303 aa)). Residues 517–881 (EKLIPEDSFQ…NECQWIGKSI (365 aa)) enclose the Reverse transcriptase domain. The segment at 520 to 887 (IPEDSFQKYP…GKSIDMNTLE (368 aa)) is RT. Asp618 contacts Mg(2+). The interval 638-742 (SDLIQDTYFI…NQDKPRCITK (105 aa)) is TRAP. The Mg(2+) site is built by Asp815 and Asp816. The tract at residues 888 to 1117 (IKSIQKQTQQ…SAKSNQQNTN (230 aa)) is CTE.

The protein belongs to the reverse transcriptase family. Telomerase subfamily. As to quaternary structure, component of the telomerase holoenzyme complex, composed of the catalytic core (the catalytic subunit TERT, the telomerase RNA template component TER and TAP65/p65), which is associated with two heterotrimeric subcomplexes: (i) the replication protein A (RPA)-related subcomplex, composed of TEB1, RPA2/TEB2 and RPA3/TEB3 and (ii) the CST-like subcomplex, composed of TAP75/p75, TAP45/p45 and TAP19/p19. TEB1 and the CST-like subcomplex are tethered to the catalytic core by TAP50/p50.

The protein resides in the nucleus. The protein localises to the chromosome. Its subcellular location is the telomere. The catalysed reaction is DNA(n) + a 2'-deoxyribonucleoside 5'-triphosphate = DNA(n+1) + diphosphate. Catalytic component of telomerase, an essential ribonucleoprotein enzyme that copies new telomeric repeats onto chromosome ends by repetitively synthesizing the short telomere-repeat sequence 5'-TTGGGG-3' using an RNA template component TER. TERT is a reverse transcriptase that adds simple sequence repeats to chromosome ends by copying a template sequence within the RNA component of the enzyme. The protein is Telomerase reverse transcriptase of Tetrahymena thermophila (strain SB210).